The sequence spans 395 residues: Cytoplasmic 60S subunit biogenesis factor REI1 homolog 2 (395 aa).

C2H2-type zinc fingers lie at residues 4–28 (LACN…SEWH), 68–92 (YSCG…SKSH), 171–194 (ACCL…HKFH), and 222–249 (FVCL…AKGH).

This sequence belongs to the REI1 family. As to quaternary structure, can form homodimer. Interacts with RLP24, RLP24A, RPL24B, EBP1 and JJJ1.

Its subcellular location is the cytoplasm. Its function is as follows. Pre-60S-associated factor involved in the cytoplasmic maturation of the 60S subunit. Involved in the dissociation and recycling of other late pre-60S factors before newly synthesized large ribosomal subunits enter translation. Can complement the growth defect of a yeast mutant lacking REI1. Required for leaf growth under cold temperature conditions. This Arabidopsis thaliana (Mouse-ear cress) protein is Cytoplasmic 60S subunit biogenesis factor REI1 homolog 2.